The primary structure comprises 104 residues: Pyrimidine/purine nucleoside phosphorylase (104 aa).

The protein belongs to the nucleoside phosphorylase PpnP family.

The enzyme catalyses a purine D-ribonucleoside + phosphate = a purine nucleobase + alpha-D-ribose 1-phosphate. It carries out the reaction adenosine + phosphate = alpha-D-ribose 1-phosphate + adenine. It catalyses the reaction cytidine + phosphate = cytosine + alpha-D-ribose 1-phosphate. The catalysed reaction is guanosine + phosphate = alpha-D-ribose 1-phosphate + guanine. The enzyme catalyses inosine + phosphate = alpha-D-ribose 1-phosphate + hypoxanthine. It carries out the reaction thymidine + phosphate = 2-deoxy-alpha-D-ribose 1-phosphate + thymine. It catalyses the reaction uridine + phosphate = alpha-D-ribose 1-phosphate + uracil. The catalysed reaction is xanthosine + phosphate = alpha-D-ribose 1-phosphate + xanthine. In terms of biological role, catalyzes the phosphorolysis of diverse nucleosides, yielding D-ribose 1-phosphate and the respective free bases. Can use uridine, adenosine, guanosine, cytidine, thymidine, inosine and xanthosine as substrates. Also catalyzes the reverse reactions. This Syntrophotalea carbinolica (strain DSM 2380 / NBRC 103641 / GraBd1) (Pelobacter carbinolicus) protein is Pyrimidine/purine nucleoside phosphorylase.